The primary structure comprises 141 residues: Neuropeptides CP2 (141 aa).

The N-terminal stretch at 1–26 is a signal peptide; it reads MDSRICTSFARLMASALCVSTLLVTA. Positions 75–94 are disordered; sequence KVDMPLPRQRTSSRSSERWA. At histidine 140 the chain carries Histidine amide.

In terms of tissue distribution, neurons.

The protein resides in the secreted. Mediates intrinsic neuromodulation. The protein is Neuropeptides CP2 (CP2PP) of Aplysia californica (California sea hare).